A 106-amino-acid chain; its full sequence is Putative membrane protein insertion efficiency factor (106 aa).

The protein belongs to the UPF0161 family.

It is found in the cell inner membrane. Its function is as follows. Could be involved in insertion of integral membrane proteins into the membrane. The sequence is that of Putative membrane protein insertion efficiency factor from Acinetobacter baumannii (strain SDF).